Consider the following 437-residue polypeptide: Enolase-related protein 1 (437 aa).

The substrate site is built by His160 and Glu169. Glu212 functions as the Proton donor in the catalytic mechanism. Positions 247, 296, and 321 each coordinate Mg(2+). Glu296 and Asp321 together coordinate substrate. Lys346 functions as the Proton acceptor in the catalytic mechanism. Substrate is bound by residues 373 to 376 (SHRS) and Lys397.

The protein belongs to the enolase family. Requires Mg(2+) as cofactor.

It carries out the reaction (2R)-2-phosphoglycerate = phosphoenolpyruvate + H2O. Its pathway is carbohydrate degradation; glycolysis; pyruvate from D-glyceraldehyde 3-phosphate: step 4/5. This Saccharomyces cerevisiae (strain ATCC 204508 / S288c) (Baker's yeast) protein is Enolase-related protein 1 (ERR1).